Consider the following 288-residue polypeptide: UTP--glucose-1-phosphate uridylyltransferase (288 aa).

It belongs to the UDPGP type 2 family.

It catalyses the reaction alpha-D-glucose 1-phosphate + UTP + H(+) = UDP-alpha-D-glucose + diphosphate. Its pathway is glycolipid metabolism; diglucosyl-diacylglycerol biosynthesis. Its function is as follows. Catalyzes the formation of UDP-glucose from glucose-1-phosphate and UTP. This is an intermediate step in the biosynthesis of diglucosyl-diacylglycerol (Glc2-DAG), i.e. the predominant glycolipid found in the S.aureus membrane, which is also used as a membrane anchor for lipoteichoic acid (LTA). This chain is UTP--glucose-1-phosphate uridylyltransferase (gtaB), found in Staphylococcus aureus (strain bovine RF122 / ET3-1).